Consider the following 347-residue polypeptide: Subtilase cytotoxin subunit A (347 aa).

A signal peptide spans Met-1 to Ala-21. The region spanning Pro-24–Ile-327 is the Peptidase S8 domain. Active-site charge relay system residues include Asp-52, His-89, and Ser-272. An intrachain disulfide couples Cys-288 to Cys-331. Positions Asn-322 to Leu-347 are A2 domain. A Prevents secretion from ER motif is present at residues Ser-344–Leu-347.

This sequence belongs to the peptidase S8 family. Forms a complex with SubB with the stoichiometry SubA1:SubB5 (called SubAB5).

It localises to the secreted. It is found in the host cytoplasm. The protein resides in the host cytosol. Its subcellular location is the host endoplasmic reticulum lumen. Its function is as follows. Protease subunit of subtilase cytotoxin SubAB5. An endoprotease specific for host endoplasmic reticulum (ER) chaperone BiP/HSPA5, has no activity on human HSP70 or HSPA8. Cleaves between 'Leu-416' and 'Leu-417' of BiP/HSPA5 in the hinge between BiP's ATPase and protein-binding domains. This induces host ER stress response and eventual cell death. Culture supernatant of E.coli expressing both subA and subB are toxic for Vero cells (African green monkey kidney cell line), Chinese hamster ovary cells and Hct-8 cells (human colonic epithelial cell line); the subunits are not toxic individually. Purified SubAB5 is highly toxic, &lt;0.1 pg is able to kill at least 50% of 30'000 Vero cells in a microtiter plate assay after 3 days; no cytotoxicity is seen at 24 hours. Preabsorption with cells expressing a ganglioside GM2 mimic reduced cytotoxicity of SubAB5 by 93% in the Vero cytotoxicity assay. Intraperitoneal injection of 200 ng of purified SubAB5 kills mice; the higher the dose the faster the mice die. Animals injected intraperitoneally with purified SubAB5 have microvascular thrombi in the brain and other organs, including the renal tubules and glomeruli. Injection induces an unfolded response in mice. Mice fed E.coli cells expressing cloned SubAB5 experience drastic weight loss and appear ill and lethargic. Protein synthesis in Vero cells is transiently inhibited by SubAB5; both subunits are required for this effect. Inhibition of protein synthesis is prevented by brefeldin A; cells are arrested in the G1 phase. SubAB5 at 100 ng/ml induced caspase-dependent apoptosis in Vero cells through mitochondrial membrane damage. The chain is Subtilase cytotoxin subunit A from Escherichia coli.